The primary structure comprises 320 residues: ATP-dependent 6-phosphofructokinase (320 aa).

Gly12 serves as a coordination point for ATP. ADP contacts are provided by residues 22–26 and 55–60; these read RGVVR and RYSVSD. ATP contacts are provided by residues 73–74 and 103–106; these read RF and GDGS. Asp104 serves as a coordination point for Mg(2+). Residue 126–128 participates in substrate binding; that stretch reads TID. Asp128 (proton acceptor) is an active-site residue. Residue Arg155 coordinates ADP. Substrate contacts are provided by residues Arg163 and 170–172; that span reads MGR. Residues 186-188, Lys212, and 214-216 contribute to the ADP site; these read GCE and KKH. Substrate-binding positions include Glu223, Arg244, and 250 to 253; that span reads HIQR.

Belongs to the phosphofructokinase type A (PFKA) family. ATP-dependent PFK group I subfamily. Prokaryotic clade 'B1' sub-subfamily. As to quaternary structure, homotetramer. Mg(2+) is required as a cofactor.

It is found in the cytoplasm. It catalyses the reaction beta-D-fructose 6-phosphate + ATP = beta-D-fructose 1,6-bisphosphate + ADP + H(+). It participates in carbohydrate degradation; glycolysis; D-glyceraldehyde 3-phosphate and glycerone phosphate from D-glucose: step 3/4. Its activity is regulated as follows. Allosterically activated by ADP and other diphosphonucleosides, and allosterically inhibited by phosphoenolpyruvate. Catalyzes the phosphorylation of D-fructose 6-phosphate to fructose 1,6-bisphosphate by ATP, the first committing step of glycolysis. This Escherichia fergusonii (strain ATCC 35469 / DSM 13698 / CCUG 18766 / IAM 14443 / JCM 21226 / LMG 7866 / NBRC 102419 / NCTC 12128 / CDC 0568-73) protein is ATP-dependent 6-phosphofructokinase.